The primary structure comprises 159 residues: Olfactory receptor-like protein COR8 (159 aa).

Residues 1–16 (VAICNPLLYTISMPKS) lie on the Cytoplasmic side of the membrane. A helical membrane pass occupies residues 17-41 (LCMKLVAGSYLGGVLNSLTQTCCLL). At 42–82 (PLPFCGPNVINHYFCDTNPLLKLTCSDGRLNELLLVTFNGT) the chain is on the extracellular side. An N-linked (GlcNAc...) asparagine glycan is attached at Asn80. Residues 83 to 103 (ISMTVLLIIVISYVYILVSIL) traverse the membrane as a helical segment. Residues 104–116 (SIRSARGRHKAFS) are Cytoplasmic-facing. Residues 117–137 (TCASHLLTVTLFYVPAGLSHM) form a helical membrane-spanning segment. Residues 138 to 148 (QPGSKYSLDME) lie on the Extracellular side of the membrane. A helical membrane pass occupies residues 149–159 (KVTAVFYTLLV).

This sequence belongs to the G-protein coupled receptor 1 family.

The protein resides in the cell membrane. Its function is as follows. Odorant receptor. The sequence is that of Olfactory receptor-like protein COR8 (COR8) from Gallus gallus (Chicken).